The sequence spans 398 residues: Argininosuccinate synthase (398 aa).

9 to 17 (AYSGGLDTS) is an ATP binding site. Residue Tyr-85 coordinates L-citrulline. An ATP-binding site is contributed by Gly-115. Thr-117, Asn-121, and Asp-122 together coordinate L-aspartate. Asn-121 is a binding site for L-citrulline. 4 residues coordinate L-citrulline: Arg-125, Ser-173, Glu-258, and Tyr-270.

The protein belongs to the argininosuccinate synthase family. Type 1 subfamily. In terms of assembly, homotetramer.

The protein resides in the cytoplasm. The catalysed reaction is L-citrulline + L-aspartate + ATP = 2-(N(omega)-L-arginino)succinate + AMP + diphosphate + H(+). It functions in the pathway amino-acid biosynthesis; L-arginine biosynthesis; L-arginine from L-ornithine and carbamoyl phosphate: step 2/3. The sequence is that of Argininosuccinate synthase from Streptococcus pneumoniae (strain Hungary19A-6).